The primary structure comprises 88 residues: Alpha-conotoxin GVIIIB (88 aa).

The N-terminal stretch at 1–20 (MMSKMGAMFVLLLLFTLASS) is a signal peptide. The propeptide occupies 21–43 (QQEGDVQARKTRPKSDFYRALPR). Position 87 is a threonine amide (Thr-87).

The protein belongs to the conotoxin S superfamily. Post-translationally, contains 5 disulfide bonds. In terms of processing, the predominant peptide contains 2 hydroxyprolines, while 2 minor peptides contains 1 and 3 hydroxyprolines. In terms of tissue distribution, expressed by the venom duct.

Its subcellular location is the secreted. Its function is as follows. Alpha-conotoxins act on postsynaptic membranes, they bind to the nicotinic acetylcholine receptors (nAChR) and thus inhibit them. This toxin shows high activity on alpha-9-alpha-10 (CHRNA9-CHRNA10) (IC(50)=9.79 nM). It also shows weak activity on alpha-3-beta-2 (CHRNA3-CHRNB2) (IC(50)~1 uM), alpha-6/alpha-3-beta-2-beta-3 (CHRNA6/CHRNA3-CHRNB2-CHRNB3) (IC(50)~1 uM). The toxin binds to the same or overlapping binding sites than conotoxin RgIA (AC P0C1D0). This is Alpha-conotoxin GVIIIB from Conus geographus (Geography cone).